Here is an 810-residue protein sequence, read N- to C-terminus: Glycerol-3-phosphate acyltransferase (810 aa).

An HXXXXD motif motif is present at residues 305–310 (CHRSHI).

Belongs to the GPAT/DAPAT family.

It localises to the cell inner membrane. The enzyme catalyses sn-glycerol 3-phosphate + an acyl-CoA = a 1-acyl-sn-glycero-3-phosphate + CoA. Its pathway is phospholipid metabolism; CDP-diacylglycerol biosynthesis; CDP-diacylglycerol from sn-glycerol 3-phosphate: step 1/3. The sequence is that of Glycerol-3-phosphate acyltransferase from Haemophilus influenzae (strain 86-028NP).